A 61-amino-acid polypeptide reads, in one-letter code: Mu-diguetoxin-Dc1c (61 aa).

3 disulfides stabilise this stretch: Cys12–Cys25, Cys19–Cys39, and Cys24–Cys53.

Belongs to the neurotoxin 26 (DTX) family. Expressed by the venom gland.

The protein resides in the secreted. In terms of biological role, acts by delaying the inactivation of presynaptic voltage-sensitive sodium channels (Nav). Acts against insects and causes a progressive spastic paralysis. In Diguetia canities (Desert bush spider), this protein is Mu-diguetoxin-Dc1c.